A 229-amino-acid chain; its full sequence is Large ribosomal subunit protein uL1 (229 aa).

This sequence belongs to the universal ribosomal protein uL1 family. Part of the 50S ribosomal subunit.

In terms of biological role, binds directly to 23S rRNA. The L1 stalk is quite mobile in the ribosome, and is involved in E site tRNA release. Protein L1 is also a translational repressor protein, it controls the translation of the L11 operon by binding to its mRNA. The sequence is that of Large ribosomal subunit protein uL1 from Streptococcus pyogenes serotype M3 (strain SSI-1).